A 56-amino-acid polypeptide reads, in one-letter code: Large ribosomal subunit protein bL33 (56 aa).

This sequence belongs to the bacterial ribosomal protein bL33 family.

This Acidovorax sp. (strain JS42) protein is Large ribosomal subunit protein bL33.